Reading from the N-terminus, the 294-residue chain is ATP synthase gamma chain (294 aa).

Belongs to the ATPase gamma chain family. In terms of assembly, F-type ATPases have 2 components, CF(1) - the catalytic core - and CF(0) - the membrane proton channel. CF(1) has five subunits: alpha(3), beta(3), gamma(1), delta(1), epsilon(1). CF(0) has three main subunits: a, b and c.

Its subcellular location is the cell inner membrane. Its function is as follows. Produces ATP from ADP in the presence of a proton gradient across the membrane. The gamma chain is believed to be important in regulating ATPase activity and the flow of protons through the CF(0) complex. The sequence is that of ATP synthase gamma chain from Campylobacter jejuni (strain RM1221).